Reading from the N-terminus, the 284-residue chain is Protoheme IX farnesyltransferase (284 aa).

9 consecutive transmembrane segments (helical) span residues 13-33 (VTVLVLATVLPGMYLGTTGYP), 35-55 (LTVISITLFGTYLMSSASFIL), 84-104 (FALLLGIVVAIVSFGILTYFI), 106-126 (LLTAVCALAALLLYVFLYTIW), 134-154 (NIVIGGISGCIGPLIGYAAMA), 163-183 (VMFLMIFLWTPAHFWALAIFL), 205-225 (VNQIFLYAIAYSLSVIGFYFV), 229-249 (MGYLFLLSAIVLTVLILGFAY), and 264-284 (FFFSILHLFLVSIAIVIDSKI).

The protein belongs to the UbiA prenyltransferase family. Protoheme IX farnesyltransferase subfamily.

The protein resides in the cell inner membrane. The enzyme catalyses heme b + (2E,6E)-farnesyl diphosphate + H2O = Fe(II)-heme o + diphosphate. Its pathway is porphyrin-containing compound metabolism; heme O biosynthesis; heme O from protoheme: step 1/1. Functionally, converts heme B (protoheme IX) to heme O by substitution of the vinyl group on carbon 2 of heme B porphyrin ring with a hydroxyethyl farnesyl side group. This Leptospira biflexa serovar Patoc (strain Patoc 1 / Ames) protein is Protoheme IX farnesyltransferase.